The primary structure comprises 311 residues: tRNA-cytidine(32) 2-sulfurtransferase (311 aa).

The short motif at 45–50 is the PP-loop motif element; the sequence is SGGKDS. The [4Fe-4S] cluster site is built by Cys-120, Cys-123, and Cys-211.

The protein belongs to the TtcA family. Homodimer. It depends on Mg(2+) as a cofactor. [4Fe-4S] cluster is required as a cofactor.

It localises to the cytoplasm. It carries out the reaction cytidine(32) in tRNA + S-sulfanyl-L-cysteinyl-[cysteine desulfurase] + AH2 + ATP = 2-thiocytidine(32) in tRNA + L-cysteinyl-[cysteine desulfurase] + A + AMP + diphosphate + H(+). The protein operates within tRNA modification. Catalyzes the ATP-dependent 2-thiolation of cytidine in position 32 of tRNA, to form 2-thiocytidine (s(2)C32). The sulfur atoms are provided by the cysteine/cysteine desulfurase (IscS) system. This chain is tRNA-cytidine(32) 2-sulfurtransferase, found in Shewanella halifaxensis (strain HAW-EB4).